We begin with the raw amino-acid sequence, 79 residues long: MAERSQHLQDVFLNTVRKQKISLTIFLVNGVKLTGIVTSFDNFCVLLRRDGHAQLVYKHAISTIMPGQPVQMFEGESSE.

Positions 10 to 70 constitute a Sm domain; that stretch reads DVFLNTVRKQ…ISTIMPGQPV (61 aa).

The protein belongs to the Hfq family. As to quaternary structure, homohexamer.

Its function is as follows. RNA chaperone that binds small regulatory RNA (sRNAs) and mRNAs to facilitate mRNA translational regulation in response to envelope stress, environmental stress and changes in metabolite concentrations. Also binds with high specificity to tRNAs. This Bartonella quintana (strain Toulouse) (Rochalimaea quintana) protein is RNA-binding protein Hfq.